We begin with the raw amino-acid sequence, 1271 residues long: SR-related and CTD-associated factor 8 (1271 aa).

In terms of domain architecture, CID spans Met1–Pro139. The residue at position 6 (Thr6) is a Phosphothreonine. Residue Lys18 forms a Glycyl lysine isopeptide (Lys-Gly) (interchain with G-Cter in SUMO1) linkage. The segment covering Gly270–Ile283 has biased composition (basic and acidic residues). 3 disordered regions span residues Gly270–Ser289, Gln322–His354, and Glu384–Arg468. Phosphoserine is present on Ser273. Positions Lys327–His354 are enriched in polar residues. The segment covering Val394–Ser443 has biased composition (basic residues). Positions Ser447 to Lys461 are enriched in basic and acidic residues. The RRM domain maps to Thr477 to Asn551. Thr615 carries the post-translational modification Phosphothreonine. Phosphoserine occurs at positions 617 and 779. The interval Thr899–Met918 is disordered. Residues Pro902 to Ser912 show a composition bias toward pro residues. Asymmetric dimethylarginine occurs at positions 917, 927, and 938. Pro residues-rich tracts occupy residues Gly945 to Ser956 and His963 to Pro972. Positions Gly945–Pro1064 are disordered. 2 stretches are compositionally biased toward basic and acidic residues: residues Glu1011–Ile1027 and Asp1034–Pro1064. The residue at position 1073 (Arg1073) is an Asymmetric dimethylarginine. The interval Tyr1198 to Thr1271 is disordered. A compositionally biased stretch (acidic residues) spans Ala1255–Thr1271.

Interacts with POLR2A; via C-terminal heptapeptide repeat domain (CTD) phosphorylated at 'Ser-2' and 'Ser-5'. Identified in a complex with CDC5L and other spliceosomal proteins.

It is found in the nucleus. The protein resides in the nucleus matrix. Its function is as follows. Anti-terminator protein required to prevent early mRNA termination during transcription. Together with SCAF4, acts by suppressing the use of early, alternative poly(A) sites, thereby preventing the accumulation of non-functional truncated proteins. Mechanistically, associates with the phosphorylated C-terminal heptapeptide repeat domain (CTD) of the largest RNA polymerase II subunit (POLR2A), and subsequently binds nascent RNA upstream of early polyadenylation sites to prevent premature mRNA transcript cleavage and polyadenylation. Independently of SCAF4, also acts as a positive regulator of transcript elongation. In Homo sapiens (Human), this protein is SR-related and CTD-associated factor 8.